We begin with the raw amino-acid sequence, 279 residues long: Tryptophan synthase alpha chain (279 aa).

Residues glutamate 50 and aspartate 61 each act as proton acceptor in the active site.

The protein belongs to the TrpA family. Tetramer of two alpha and two beta chains.

It catalyses the reaction (1S,2R)-1-C-(indol-3-yl)glycerol 3-phosphate + L-serine = D-glyceraldehyde 3-phosphate + L-tryptophan + H2O. It functions in the pathway amino-acid biosynthesis; L-tryptophan biosynthesis; L-tryptophan from chorismate: step 5/5. Functionally, the alpha subunit is responsible for the aldol cleavage of indoleglycerol phosphate to indole and glyceraldehyde 3-phosphate. The chain is Tryptophan synthase alpha chain from Brucella ovis (strain ATCC 25840 / 63/290 / NCTC 10512).